A 115-amino-acid chain; its full sequence is Yop proteins translocation protein M (115 aa).

The interval 19 to 38 (HGGQAGRLTETNPLTENSHQ) is disordered. Positions 27 to 38 (TETNPLTENSHQ) are enriched in polar residues.

In terms of biological role, belongs to an operon involved in the translocation of Yop proteins across the bacterial membranes or in the specific control of this function. In Yersinia pestis, this protein is Yop proteins translocation protein M (yscM).